The primary structure comprises 549 residues: Zinc finger protein 382 (549 aa).

Positions 1-105 (MNCHSVPLQG…DKPPTSIVII (105 aa)) are mediates interaction with TRIM28. Represses transcription stretches follow at residues 10–51 (GPVS…FISV) and 75–210 (MFPS…PEQR). Positions 12-83 (VSFKDVTVDF…RMFPSQSYLE (72 aa)) constitute a KRAB domain. 10 C2H2-type zinc fingers span residues 211–233 (FECD…DRAH), 295–317 (FQCP…QRIH), 323–345 (YICS…EKTH), 351–373 (YLCV…HKTH), 379–401 (YECT…QRTH), 407–429 (YQCA…QRTH), 435–457 (YMCS…QRIH), 463–485 (YVCS…YRIH), 491–513 (NGCP…QKTH), and 519–541 (YECH…QKTH). The interval 295 to 549 (FQCPYCGNSF…THKAETVRFQ (255 aa)) is required for transcriptional repression activity; probably mediates sequence-specific DNA-binding.

It belongs to the krueppel C2H2-type zinc-finger protein family. Interacts with TRIM28; enhances the transcriptional repressor activity. As to expression, ubiquitously expressed with higher expression in lung, kidney and testis.

It is found in the nucleus. In terms of biological role, functions as a sequence-specific transcriptional repressor. This is Zinc finger protein 382 (Znf382) from Rattus norvegicus (Rat).